Here is a 416-residue protein sequence, read N- to C-terminus: Cell division control protein 3 (416 aa).

The Septin-type G domain maps to 32 to 307 (RGFSLNIMAI…ENYRTEKLKR (276 aa)). A G1 motif region spans residues 42-49 (GESGLGKA). Residues 42 to 49 (GESGLGKA), Ser79, Gly105, 184 to 192 (KSDTLTDEE), Gly240, and Arg256 each bind GTP. The tract at residues 102–105 (TAPG) is G3 motif. Residues 183–186 (AKSD) are G4 motif. Residues 323 to 399 (AAKQEEERAL…QLEKQKLLPQ (77 aa)) are a coiled coil. Residues 392–416 (EKQKLLPQDPPAQPAPQKSRKGFLR) form a disordered region.

The protein belongs to the TRAFAC class TrmE-Era-EngA-EngB-Septin-like GTPase superfamily. Septin GTPase family.

The protein resides in the bud neck. Its function is as follows. Plays a role in the cell cycle. Involved in the formation of the ring of filaments in the neck region at the mother-bud junction during mitosis. The protein is Cell division control protein 3 (CDC3) of Candida albicans (Yeast).